Here is a 336-residue protein sequence, read N- to C-terminus: Holliday junction branch migration complex subunit RuvB (336 aa).

Residues 4-184 form a large ATPase domain (RuvB-L) region; the sequence is ADRLISAGTT…FGIVQRLEFY (181 aa). Residues Ile23, Arg24, Gly65, Lys68, Thr69, Thr70, 131 to 133, Arg174, Tyr184, and Arg221 each bind ATP; that span reads EDY. Mg(2+) is bound at residue Thr69. A small ATPAse domain (RuvB-S) region spans residues 185–255; it reads QVPDLQYIVS…IAAQALDMLN (71 aa). Positions 258–336 are head domain (RuvB-H); the sequence is AEGFDYMDRK…HFGITPPEMP (79 aa). Positions 294, 313, and 318 each coordinate DNA.

This sequence belongs to the RuvB family. In terms of assembly, homohexamer. Forms an RuvA(8)-RuvB(12)-Holliday junction (HJ) complex. HJ DNA is sandwiched between 2 RuvA tetramers; dsDNA enters through RuvA and exits via RuvB. An RuvB hexamer assembles on each DNA strand where it exits the tetramer. Each RuvB hexamer is contacted by two RuvA subunits (via domain III) on 2 adjacent RuvB subunits; this complex drives branch migration. In the full resolvosome a probable DNA-RuvA(4)-RuvB(12)-RuvC(2) complex forms which resolves the HJ.

The protein localises to the cytoplasm. It catalyses the reaction ATP + H2O = ADP + phosphate + H(+). In terms of biological role, the RuvA-RuvB-RuvC complex processes Holliday junction (HJ) DNA during genetic recombination and DNA repair, while the RuvA-RuvB complex plays an important role in the rescue of blocked DNA replication forks via replication fork reversal (RFR). RuvA specifically binds to HJ cruciform DNA, conferring on it an open structure. The RuvB hexamer acts as an ATP-dependent pump, pulling dsDNA into and through the RuvAB complex. RuvB forms 2 homohexamers on either side of HJ DNA bound by 1 or 2 RuvA tetramers; 4 subunits per hexamer contact DNA at a time. Coordinated motions by a converter formed by DNA-disengaged RuvB subunits stimulates ATP hydrolysis and nucleotide exchange. Immobilization of the converter enables RuvB to convert the ATP-contained energy into a lever motion, pulling 2 nucleotides of DNA out of the RuvA tetramer per ATP hydrolyzed, thus driving DNA branch migration. The RuvB motors rotate together with the DNA substrate, which together with the progressing nucleotide cycle form the mechanistic basis for DNA recombination by continuous HJ branch migration. Branch migration allows RuvC to scan DNA until it finds its consensus sequence, where it cleaves and resolves cruciform DNA. This Escherichia coli O17:K52:H18 (strain UMN026 / ExPEC) protein is Holliday junction branch migration complex subunit RuvB.